The following is a 153-amino-acid chain: Superoxide dismutase [Cu-Zn] (153 aa).

Cu cation contacts are provided by His45, His47, and His62. Cys56 and Cys145 are joined by a disulfide. Residues His62, His70, His79, and Asp82 each coordinate Zn(2+). His119 contributes to the Cu cation binding site.

The protein belongs to the Cu-Zn superoxide dismutase family. As to quaternary structure, homodimer. Cu cation is required as a cofactor. It depends on Zn(2+) as a cofactor.

It localises to the cytoplasm. The catalysed reaction is 2 superoxide + 2 H(+) = H2O2 + O2. In terms of biological role, destroys radicals which are normally produced within the cells and which are toxic to biological systems. This chain is Superoxide dismutase [Cu-Zn] (Sod), found in Chymomyza amoena.